The following is a 414-amino-acid chain: Gamma-glutamyl phosphate reductase (414 aa).

Belongs to the gamma-glutamyl phosphate reductase family.

The protein resides in the cytoplasm. It catalyses the reaction L-glutamate 5-semialdehyde + phosphate + NADP(+) = L-glutamyl 5-phosphate + NADPH + H(+). The protein operates within amino-acid biosynthesis; L-proline biosynthesis; L-glutamate 5-semialdehyde from L-glutamate: step 2/2. Its function is as follows. Catalyzes the NADPH-dependent reduction of L-glutamate 5-phosphate into L-glutamate 5-semialdehyde and phosphate. The product spontaneously undergoes cyclization to form 1-pyrroline-5-carboxylate. This Thermoanaerobacter sp. (strain X514) protein is Gamma-glutamyl phosphate reductase.